We begin with the raw amino-acid sequence, 234 residues long: UPF0502 protein BTH_II0990 (234 aa).

It belongs to the UPF0502 family.

The sequence is that of UPF0502 protein BTH_II0990 from Burkholderia thailandensis (strain ATCC 700388 / DSM 13276 / CCUG 48851 / CIP 106301 / E264).